A 270-amino-acid chain; its full sequence is Glucosamine-6-phosphate deaminase (270 aa).

The active-site Proton acceptor; for enolization step is the D68. Residue D145 is the For ring-opening step of the active site. H147 acts as the Proton acceptor; for ring-opening step in catalysis. E152 (for ring-opening step) is an active-site residue.

It belongs to the glucosamine/galactosamine-6-phosphate isomerase family. NagB subfamily.

The catalysed reaction is alpha-D-glucosamine 6-phosphate + H2O = beta-D-fructose 6-phosphate + NH4(+). The protein operates within amino-sugar metabolism; N-acetylneuraminate degradation; D-fructose 6-phosphate from N-acetylneuraminate: step 5/5. Functionally, catalyzes the reversible isomerization-deamination of glucosamine 6-phosphate (GlcN6P) to form fructose 6-phosphate (Fru6P) and ammonium ion. In Bifidobacterium longum (strain NCC 2705), this protein is Glucosamine-6-phosphate deaminase.